A 138-amino-acid polypeptide reads, in one-letter code: Class I hydrophobin 3 (138 aa).

An N-terminal signal peptide occupies residues M1–A16. Disulfide bonds link C40/C111, C48/C105, C49/C87, and C112/C130.

Belongs to the fungal hydrophobin family. Self-assembles to form functional amyloid fibrils called rodlets. Self-assembly into fibrillar rodlets occurs spontaneously at hydrophobic:hydrophilic interfaces and the rodlets further associate laterally to form amphipathic monolayers.

It localises to the secreted. The protein localises to the cell wall. Aerial growth, conidiation, and dispersal of filamentous fungi in the environment rely upon a capability of their secreting small amphipathic proteins called hydrophobins (HPBs) with low sequence identity. Class I can self-assemble into an outermost layer of rodlet bundles on aerial cell surfaces, conferring cellular hydrophobicity that supports fungal growth, development and dispersal; whereas Class II form highly ordered films at water-air interfaces through intermolecular interactions but contribute nothing to the rodlet structure. HYD3 is a class I hydrophobin that contributes to the formation of aerial hyphae and fruiting bodies. The chain is Class I hydrophobin 3 from Cordyceps militaris (Caterpillar fungus).